Reading from the N-terminus, the 395-residue chain is Tryptophan synthase beta chain (395 aa).

Residue Lys-89 is modified to N6-(pyridoxal phosphate)lysine.

It belongs to the TrpB family. In terms of assembly, tetramer of two alpha and two beta chains. Pyridoxal 5'-phosphate is required as a cofactor.

It carries out the reaction (1S,2R)-1-C-(indol-3-yl)glycerol 3-phosphate + L-serine = D-glyceraldehyde 3-phosphate + L-tryptophan + H2O. The protein operates within amino-acid biosynthesis; L-tryptophan biosynthesis; L-tryptophan from chorismate: step 5/5. In terms of biological role, the beta subunit is responsible for the synthesis of L-tryptophan from indole and L-serine. This Fusobacterium nucleatum subsp. nucleatum (strain ATCC 25586 / DSM 15643 / BCRC 10681 / CIP 101130 / JCM 8532 / KCTC 2640 / LMG 13131 / VPI 4355) protein is Tryptophan synthase beta chain.